The following is a 498-amino-acid chain: Phosphoethanolamine N-methyltransferase 1 (498 aa).

Residues Gly-68, Arg-73, Asp-89, Asp-115, Val-116, and Asn-134 each contribute to the S-adenosyl-L-homocysteine site. Phosphocholine is bound by residues Ser-167, Ser-172, Gly-173, Arg-177, and Tyr-184. Residues 253-254 and Tyr-262 contribute to the N-methylethanolamine phosphate site; that span reads QY. A phosphocholine-binding site is contributed by Tyr-262. Val-271, Ser-272, Gly-298, Asp-320, Asp-346, Cys-347, and Arg-363 together coordinate S-adenosyl-L-homocysteine. Tyr-394, Tyr-408, Arg-412, Tyr-414, and Lys-480 together coordinate phosphocholine. N-methylethanolamine phosphate-binding positions include Tyr-394, Tyr-408, 412-414, and Lys-480; that span reads RGY.

It belongs to the class I-like SAM-binding methyltransferase superfamily. PEAMT family.

The enzyme catalyses phosphoethanolamine + S-adenosyl-L-methionine = N-methylethanolamine phosphate + S-adenosyl-L-homocysteine + H(+). The catalysed reaction is N-methylethanolamine phosphate + S-adenosyl-L-methionine = N,N-dimethylethanolamine phosphate + S-adenosyl-L-homocysteine + H(+). It catalyses the reaction N,N-dimethylethanolamine phosphate + S-adenosyl-L-methionine = phosphocholine + S-adenosyl-L-homocysteine + H(+). It participates in phospholipid metabolism; phosphatidylcholine biosynthesis; phosphocholine from phosphoethanolamine: step 1/1. Inhibited by phosphatidic acid. Its function is as follows. Involved in phosphocholine biosynthesis. Catalyzes the N-methylation of phosphoethanolamine, phosphomonomethylethanolamine and phosphodimethylethanolamine, the three methylation steps required to convert phosphoethanolamine to phosphocholine (PC). The polypeptide is Phosphoethanolamine N-methyltransferase 1 (Triticum aestivum (Wheat)).